A 202-amino-acid chain; its full sequence is Potassium-transporting ATPase KdpC subunit 1 (202 aa).

A helical transmembrane segment spans residues Leu17–Phe37.

Belongs to the KdpC family. As to quaternary structure, the system is composed of three essential subunits: KdpA, KdpB and KdpC.

The protein localises to the cell inner membrane. Part of the high-affinity ATP-driven potassium transport (or Kdp) system, which catalyzes the hydrolysis of ATP coupled with the electrogenic transport of potassium into the cytoplasm. This subunit acts as a catalytic chaperone that increases the ATP-binding affinity of the ATP-hydrolyzing subunit KdpB by the formation of a transient KdpB/KdpC/ATP ternary complex. The polypeptide is Potassium-transporting ATPase KdpC subunit 1 (Nostoc sp. (strain PCC 7120 / SAG 25.82 / UTEX 2576)).